A 404-amino-acid polypeptide reads, in one-letter code: DNA gyrase subunit B (404 aa).

The Toprim domain maps to 321-404; that stretch reads SEIYIVEGDS…VIIMTDADVD (84 aa). Mg(2+) is bound by residues glutamate 327, aspartate 400, and aspartate 402.

It belongs to the type II topoisomerase GyrB family. As to quaternary structure, heterotetramer, composed of two GyrA and two GyrB chains. In the heterotetramer, GyrA contains the active site tyrosine that forms a transient covalent intermediate with DNA, while GyrB binds cofactors and catalyzes ATP hydrolysis. Mg(2+) is required as a cofactor. It depends on Mn(2+) as a cofactor. The cofactor is Ca(2+).

It localises to the cytoplasm. The catalysed reaction is ATP-dependent breakage, passage and rejoining of double-stranded DNA.. In terms of biological role, a type II topoisomerase that negatively supercoils closed circular double-stranded (ds) DNA in an ATP-dependent manner to modulate DNA topology and maintain chromosomes in an underwound state. Negative supercoiling favors strand separation, and DNA replication, transcription, recombination and repair, all of which involve strand separation. Also able to catalyze the interconversion of other topological isomers of dsDNA rings, including catenanes and knotted rings. Type II topoisomerases break and join 2 DNA strands simultaneously in an ATP-dependent manner. This is DNA gyrase subunit B (gyrB) from Bacillus mycoides.